The sequence spans 84 residues: Putative protein BCE-1 (84 aa).

The protein is Putative protein BCE-1 (BCE1) of Homo sapiens (Human).